A 320-amino-acid chain; its full sequence is Epoxidase atD (320 aa).

N-linked (GlcNAc...) asparagine glycans are attached at residues asparagine 245 and asparagine 299.

The protein operates within secondary metabolite biosynthesis. Functionally, epoxidase; part of the gene cluster that mediates the biosynthesis of terreic acid, a quinone epoxide inhibitor of Bruton's tyrosine kinase. The first step of the pathway is the synthesis of 6-methylsalicylic acid (6-MSA) by the 6-methylsalicylic acid synthase atX. In the biosynthesis of 6-MSA, atX utilizes one acetyl-CoA and three malonyl-CoAs as its substrates and catalyzes a series of programmed reactions including Claisen condensation, reduction, aldol cyclization, and the hydrolytic cleavage that yields 6-MSA. The 6-methylsalicylate 1-monooxygenase atA then catalyzes the decarboxylative hydroxylation of 6-MSA to 3-methylcatechol. The next step is the conversion of 3-methylcatechol to 3-methyl-1,2,4-benzenetriol by cytochrome P450 monooxygenase atE, which is enhanced by cytochrome P450 monooxygenase atG. Then, the epoxidase atD catalyzes the epoxidation and hydroxyl oxidation of 3-methyl-1,2,4-benzenetriol to terremutin. Lastly, GMC oxidoreductase atC oxidizes terremutin to terreic acid. This chain is Epoxidase atD, found in Aspergillus terreus (strain NIH 2624 / FGSC A1156).